A 225-amino-acid chain; its full sequence is DNA-binding response regulator MtrA (225 aa).

The 114-residue stretch at 4–117 (RILVVDDDAS…ELVARVRARL (114 aa)) folds into the Response regulatory domain. Position 53 is a 4-aspartylphosphate (D53). Residues 125 to 224 (AEMLSIADVD…VRGVGYKAGP (100 aa)) constitute a DNA-binding region (ompR/PhoB-type).

Post-translationally, phosphorylated by MtrB.

Member of the two-component regulatory system MtrA/MtrB. This chain is DNA-binding response regulator MtrA (mtrA), found in Mycobacterium leprae (strain TN).